A 326-amino-acid chain; its full sequence is Tetraacyldisaccharide 4'-kinase (326 aa).

55-62 (TAGGNGKT) is an ATP binding site.

This sequence belongs to the LpxK family.

The catalysed reaction is a lipid A disaccharide + ATP = a lipid IVA + ADP + H(+). It participates in glycolipid biosynthesis; lipid IV(A) biosynthesis; lipid IV(A) from (3R)-3-hydroxytetradecanoyl-[acyl-carrier-protein] and UDP-N-acetyl-alpha-D-glucosamine: step 6/6. Transfers the gamma-phosphate of ATP to the 4'-position of a tetraacyldisaccharide 1-phosphate intermediate (termed DS-1-P) to form tetraacyldisaccharide 1,4'-bis-phosphate (lipid IVA). The sequence is that of Tetraacyldisaccharide 4'-kinase from Erwinia tasmaniensis (strain DSM 17950 / CFBP 7177 / CIP 109463 / NCPPB 4357 / Et1/99).